The sequence spans 224 residues: MKVAGADEAGRGPVIGPLVIVAAVVEEDKIRSLTKLGVKDSKQLTPAQREKLFDEIVKVLDDYSVVIVSPQDIDGRKGSMNELEVENFVKALNSLKVKPEVIYIDSADVKAERFAENIRSRLAYEAKVVAEHKADAKYEIVSAASILAKVIRDREIEKLKAEYGDFGSGYPSDPRTKKWLEEWYSKHGNFPPIVRRTWDTAKKIEEKFKRAQLTLDNFLKRFRN.

The RNase H type-2 domain occupies 1-210; that stretch reads MKVAGADEAG…AKKIEEKFKR (210 aa). 3 residues coordinate a divalent metal cation: aspartate 7, glutamate 8, and aspartate 105.

Belongs to the RNase HII family. The cofactor is Mn(2+). Mg(2+) is required as a cofactor.

Its subcellular location is the cytoplasm. It carries out the reaction Endonucleolytic cleavage to 5'-phosphomonoester.. Functionally, endonuclease that specifically degrades the RNA of RNA-DNA hybrids. In Pyrococcus abyssi (strain GE5 / Orsay), this protein is Ribonuclease HII (rnhB).